An 89-amino-acid chain; its full sequence is MALLDFFLSRKKQTANIAKERLQIIVAERRRGDSEPPYLPDLKRDILAVICKYIQIDPEMLHVQFEQKGDDISVLELNVTLPESEEVTK.

It belongs to the MinE family.

Functionally, prevents the cell division inhibition by proteins MinC and MinD at internal division sites while permitting inhibition at polar sites. This ensures cell division at the proper site by restricting the formation of a division septum at the midpoint of the long axis of the cell. This chain is Cell division topological specificity factor, found in Serratia proteamaculans (strain 568).